A 264-amino-acid chain; its full sequence is E3 ubiquitin-protein ligase MARCHF8 (264 aa).

The segment at 15–47 is disordered; it reads LGHSVSRSSNISKAGSPTSVSAPSSFPRTSVTP. The span at 17 to 47 shows a compositional bias: polar residues; sequence HSVSRSSNISKAGSPTSVSAPSSFPRTSVTP. The RING-CH-type zinc-finger motif lies at 45–106; the sequence is VTPSSQDICR…ELCKFEFIME (62 aa). C53, C56, C70, C72, H80, C83, C96, and C99 together coordinate Zn(2+). 2 helical membrane passes run 130–150 and 170–190; these read CSVT…YVLI and FWTK…FMYV.

It is found in the cytoplasmic vesicle membrane. It localises to the lysosome membrane. Its subcellular location is the early endosome membrane. It catalyses the reaction S-ubiquitinyl-[E2 ubiquitin-conjugating enzyme]-L-cysteine + [acceptor protein]-L-lysine = [E2 ubiquitin-conjugating enzyme]-L-cysteine + N(6)-ubiquitinyl-[acceptor protein]-L-lysine.. It participates in protein modification; protein ubiquitination. E3 ubiquitin-protein ligase that mediates ubiquitination of cd86 and MHC class II proteins, such as hla-dr alpha and beta, and promotes their subsequent endocytosis and sorting to lysosomes via multivesicular bodies. The polypeptide is E3 ubiquitin-protein ligase MARCHF8 (marchf8) (Xenopus tropicalis (Western clawed frog)).